A 187-amino-acid chain; its full sequence is V-type ATP synthase subunit E (187 aa).

Belongs to the V-ATPase E subunit family.

Produces ATP from ADP in the presence of a proton gradient across the membrane. This chain is V-type ATP synthase subunit E, found in Geotalea uraniireducens (strain Rf4) (Geobacter uraniireducens).